The chain runs to 390 residues: MGTRAIVSDANILSGLESNATGVTAFSMPGWQLALWATAYLALVLVAVTGNATVIWIILAHERMRTVTNYFIINLALADLCMAAFNATFNFIYASHNIWYFGRAFCYFQNLFPITAMFVSIYSMTAIAADRYMAIVHPFQPRLSAPSTKAIIAGIWLVALALASPQCFYSTITVDEGATKCVVAWPNDNGGKMLLLYHLVVFVLIYFLPLLVMFGAYSVIGLTLWKRAVPRHQAHGANLRHLQAKKKFVKAMVLVVLTFAICWLPYHLYFILGTFQEDIYYHKFIQQVYLALFWLAMSSTMYNPIIYCCLNHRFRSGFRLAFRCCPWVTPTEEDRLELTHTPSLSRRVNRCHTKETLFMTGDMTHSEATNGQVGSPQDGEPAGPICKAQA.

Residues 1–32 (MGTRAIVSDANILSGLESNATGVTAFSMPGWQ) lie on the Extracellular side of the membrane. N19 is a glycosylation site (N-linked (GlcNAc...) asparagine). The chain crosses the membrane as a helical span at residues 33–56 (LALWATAYLALVLVAVTGNATVIW). Topologically, residues 57-69 (IILAHERMRTVTN) are cytoplasmic. A helical transmembrane segment spans residues 70–90 (YFIINLALADLCMAAFNATFN). Over 91-107 (FIYASHNIWYFGRAFCY) the chain is Extracellular. A disulfide bridge connects residues C106 and C181. Residues 108–129 (FQNLFPITAMFVSIYSMTAIAA) form a helical membrane-spanning segment. The Cytoplasmic segment spans residues 130–149 (DRYMAIVHPFQPRLSAPSTK). The chain crosses the membrane as a helical span at residues 150–170 (AIIAGIWLVALALASPQCFYS). The Extracellular portion of the chain corresponds to 171–196 (TITVDEGATKCVVAWPNDNGGKMLLL). The chain crosses the membrane as a helical span at residues 197–218 (YHLVVFVLIYFLPLLVMFGAYS). Residues 219–251 (VIGLTLWKRAVPRHQAHGANLRHLQAKKKFVKA) lie on the Cytoplasmic side of the membrane. Residues 252–272 (MVLVVLTFAICWLPYHLYFIL) form a helical membrane-spanning segment. At 273–290 (GTFQEDIYYHKFIQQVYL) the chain is on the extracellular side. Residues 291 to 310 (ALFWLAMSSTMYNPIIYCCL) form a helical membrane-spanning segment. Topologically, residues 311–390 (NHRFRSGFRL…PAGPICKAQA (80 aa)) are cytoplasmic. C324 carries the S-palmitoyl cysteine lipid modification. The tract at residues 365 to 390 (HSEATNGQVGSPQDGEPAGPICKAQA) is disordered. Residues 366–375 (SEATNGQVGS) are compositionally biased toward polar residues.

This sequence belongs to the G-protein coupled receptor 1 family.

The protein resides in the cell membrane. In terms of biological role, this is a receptor for the tachykinin neuropeptide substance K (neurokinin A). It is associated with G proteins that activate a phosphatidylinositol-calcium second messenger system. The rank order of affinity of this receptor to tachykinins is: substance K &gt; neuromedin-K &gt; substance P. The polypeptide is Substance-K receptor (Tacr2) (Rattus norvegicus (Rat)).